Reading from the N-terminus, the 65-residue chain is MNGQERNSISKGLQVDIVLKADQKTGKLTRGTVKDILTKSNFHPHGIKVRLEDGRIGRDQQIVST.

This is an uncharacterized protein from Bacillus subtilis (strain 168).